Reading from the N-terminus, the 510-residue chain is Amidophosphoribosyltransferase (510 aa).

The active-site Nucleophile is the cysteine 2. The 238-residue stretch at 2–239 folds into the Glutamine amidotransferase type-2 domain; the sequence is CGILGIVLAN…PGEAVIIPKN (238 aa). Residues aspartate 373 and aspartate 374 each coordinate Mg(2+).

In the C-terminal section; belongs to the purine/pyrimidine phosphoribosyltransferase family. It depends on Mg(2+) as a cofactor.

The catalysed reaction is 5-phospho-beta-D-ribosylamine + L-glutamate + diphosphate = 5-phospho-alpha-D-ribose 1-diphosphate + L-glutamine + H2O. It functions in the pathway purine metabolism; IMP biosynthesis via de novo pathway; N(1)-(5-phospho-D-ribosyl)glycinamide from 5-phospho-alpha-D-ribose 1-diphosphate: step 1/2. The sequence is that of Amidophosphoribosyltransferase (ADE4) from Saccharomyces cerevisiae (strain ATCC 204508 / S288c) (Baker's yeast).